The primary structure comprises 249 residues: tRNA (guanine-N(1)-)-methyltransferase (249 aa).

S-adenosyl-L-methionine contacts are provided by residues Gly-112 and 132-137 (LGDFVL).

Belongs to the RNA methyltransferase TrmD family. As to quaternary structure, homodimer.

It is found in the cytoplasm. It catalyses the reaction guanosine(37) in tRNA + S-adenosyl-L-methionine = N(1)-methylguanosine(37) in tRNA + S-adenosyl-L-homocysteine + H(+). Specifically methylates guanosine-37 in various tRNAs. The chain is tRNA (guanine-N(1)-)-methyltransferase from Geobacter sp. (strain M21).